The sequence spans 1361 residues: DNA-directed RNA polymerase subunit beta'' (1361 aa).

Cys-224, Cys-295, Cys-302, and Cys-305 together coordinate Zn(2+).

It belongs to the RNA polymerase beta' chain family. RpoC2 subfamily. As to quaternary structure, in plastids the minimal PEP RNA polymerase catalytic core is composed of four subunits: alpha, beta, beta', and beta''. When a (nuclear-encoded) sigma factor is associated with the core the holoenzyme is formed, which can initiate transcription. The cofactor is Zn(2+).

It localises to the plastid. Its subcellular location is the chloroplast. The enzyme catalyses RNA(n) + a ribonucleoside 5'-triphosphate = RNA(n+1) + diphosphate. Functionally, DNA-dependent RNA polymerase catalyzes the transcription of DNA into RNA using the four ribonucleoside triphosphates as substrates. The sequence is that of DNA-directed RNA polymerase subunit beta'' from Spinacia oleracea (Spinach).